The chain runs to 244 residues: 3-deoxy-manno-octulosonate cytidylyltransferase (244 aa).

It belongs to the KdsB family.

Its subcellular location is the cytoplasm. It carries out the reaction 3-deoxy-alpha-D-manno-oct-2-ulosonate + CTP = CMP-3-deoxy-beta-D-manno-octulosonate + diphosphate. The protein operates within nucleotide-sugar biosynthesis; CMP-3-deoxy-D-manno-octulosonate biosynthesis; CMP-3-deoxy-D-manno-octulosonate from 3-deoxy-D-manno-octulosonate and CTP: step 1/1. It participates in bacterial outer membrane biogenesis; lipopolysaccharide biosynthesis. In terms of biological role, activates KDO (a required 8-carbon sugar) for incorporation into bacterial lipopolysaccharide in Gram-negative bacteria. The protein is 3-deoxy-manno-octulosonate cytidylyltransferase of Ruthia magnifica subsp. Calyptogena magnifica.